The primary structure comprises 258 residues: Tritrans,polycis-undecaprenyl-diphosphate synthase (geranylgeranyl-diphosphate specific) (258 aa).

The active site involves D37. D37 serves as a coordination point for Mg(2+). Substrate-binding positions include 38–41 (GNRR), H54, and 82–84 (STE). N85 serves as the catalytic Proton acceptor. Substrate is bound by residues F86, R88, R207, and 213 to 215 (RIS). A Mg(2+)-binding site is contributed by E226.

Belongs to the UPP synthase family. In terms of assembly, homodimer. Mg(2+) is required as a cofactor.

It catalyses the reaction geranylgeranyl diphosphate + 7 isopentenyl diphosphate = tri-trans,hepta-cis-undecaprenyl diphosphate + 7 diphosphate. Its function is as follows. Catalyzes the sequential condensation of isopentenyl diphosphate (IPP) with geranylgeranyl diphosphate (GGPP) to yield (2Z,6Z,10Z,14Z,18Z,22Z,26Z,30E,34E,38E)-undecaprenyl diphosphate (tritrans,heptacis-UPP). It is probably the precursor of glycosyl carrier lipids. The polypeptide is Tritrans,polycis-undecaprenyl-diphosphate synthase (geranylgeranyl-diphosphate specific) (Thermoplasma acidophilum (strain ATCC 25905 / DSM 1728 / JCM 9062 / NBRC 15155 / AMRC-C165)).